A 1020-amino-acid chain; its full sequence is Glycine dehydrogenase (decarboxylating), mitochondrial (1020 aa).

Residues 1-35 (MQSCARAWGLRLGRGVGGGRRLAGGSGPCWAPRSR) constitute a mitochondrion transit peptide. The tract at residues 21-46 (RLAGGSGPCWAPRSRDSSSGGGDSAA) is disordered. Residues Lys-447, Lys-514, Lys-648, and Lys-664 each carry the N6-acetyllysine modification. Lys-754 carries the N6-(pyridoxal phosphate)lysine modification.

It belongs to the GcvP family. Homodimer. Interacts with GCSH. The glycine cleavage system is composed of four proteins: P (GLDC), T (GCST), L (DLD) and H (GCSH). The cofactor is pyridoxal 5'-phosphate.

It localises to the mitochondrion. The enzyme catalyses N(6)-[(R)-lipoyl]-L-lysyl-[glycine-cleavage complex H protein] + glycine + H(+) = N(6)-[(R)-S(8)-aminomethyldihydrolipoyl]-L-lysyl-[glycine-cleavage complex H protein] + CO2. Its activity is regulated as follows. Stimulated by lipoic acid. Inhibited in presence of methylamine. In terms of biological role, the glycine cleavage system catalyzes the degradation of glycine. The P protein (GLDC) binds the alpha-amino group of glycine through its pyridoxal phosphate cofactor; CO(2) is released and the remaining methylamine moiety is then transferred to the lipoamide cofactor of the H protein (GCSH). The chain is Glycine dehydrogenase (decarboxylating), mitochondrial from Homo sapiens (Human).